The chain runs to 222 residues: Probable transaldolase 2 (222 aa).

Lysine 90 serves as the catalytic Schiff-base intermediate with substrate.

Belongs to the transaldolase family. Type 3B subfamily.

The protein resides in the cytoplasm. It carries out the reaction D-sedoheptulose 7-phosphate + D-glyceraldehyde 3-phosphate = D-erythrose 4-phosphate + beta-D-fructose 6-phosphate. It functions in the pathway carbohydrate degradation; pentose phosphate pathway; D-glyceraldehyde 3-phosphate and beta-D-fructose 6-phosphate from D-ribose 5-phosphate and D-xylulose 5-phosphate (non-oxidative stage): step 2/3. Its function is as follows. Transaldolase is important for the balance of metabolites in the pentose-phosphate pathway. This Bacillus anthracis protein is Probable transaldolase 2.